Reading from the N-terminus, the 199-residue chain is Protein-methionine-sulfoxide reductase heme-binding subunit MsrQ (199 aa).

5 consecutive transmembrane segments (helical) span residues 13-33, 79-99, 120-140, 147-167, and 169-189; these read VLLH…VDQG, LLGL…ALLE, LGII…QIMM, WQKL…HYLW, and VKTL…LLLL.

It belongs to the MsrQ family. In terms of assembly, heterodimer of a catalytic subunit (MsrP) and a heme-binding subunit (MsrQ). It depends on FMN as a cofactor. Heme b is required as a cofactor.

It is found in the cell inner membrane. Part of the MsrPQ system that repairs oxidized periplasmic proteins containing methionine sulfoxide residues (Met-O), using respiratory chain electrons. Thus protects these proteins from oxidative-stress damage caused by reactive species of oxygen and chlorine generated by the host defense mechanisms. MsrPQ is essential for the maintenance of envelope integrity under bleach stress, rescuing a wide series of structurally unrelated periplasmic proteins from methionine oxidation. MsrQ provides electrons for reduction to the reductase catalytic subunit MsrP, using the quinone pool of the respiratory chain. This Pectobacterium atrosepticum (strain SCRI 1043 / ATCC BAA-672) (Erwinia carotovora subsp. atroseptica) protein is Protein-methionine-sulfoxide reductase heme-binding subunit MsrQ.